The primary structure comprises 368 residues: 3-dehydroquinate synthase (368 aa).

Residues 69–74, 103–107, 127–128, Lys140, and Lys149 contribute to the NAD(+) site; these read DGEAYK, GVIGD, and TT. Positions 182, 245, and 262 each coordinate Zn(2+).

This sequence belongs to the sugar phosphate cyclases superfamily. Dehydroquinate synthase family. Co(2+) is required as a cofactor. Requires Zn(2+) as cofactor. It depends on NAD(+) as a cofactor.

It is found in the cytoplasm. The catalysed reaction is 7-phospho-2-dehydro-3-deoxy-D-arabino-heptonate = 3-dehydroquinate + phosphate. Its pathway is metabolic intermediate biosynthesis; chorismate biosynthesis; chorismate from D-erythrose 4-phosphate and phosphoenolpyruvate: step 2/7. Its function is as follows. Catalyzes the conversion of 3-deoxy-D-arabino-heptulosonate 7-phosphate (DAHP) to dehydroquinate (DHQ). The protein is 3-dehydroquinate synthase of Pseudomonas aeruginosa (strain LESB58).